A 143-amino-acid polypeptide reads, in one-letter code: Hexaprenyl-diphosphate synthase small subunit ((2E,6E)-farnesyl-diphosphate specific) (143 aa).

In terms of assembly, dimer of heterodimer or heterotetramer composed of a small (Hexs-a) and large (Hexs-B) subunit.

It carries out the reaction 3 isopentenyl diphosphate + (2E,6E)-farnesyl diphosphate = all-trans-hexaprenyl diphosphate + 3 diphosphate. Catalyzes the condensation of three molecules of isopentenyl diphosphate with farnesyl diphosphate (FPP) to yield (all-E)-hexaprenyl diphosphate (HexPP; C30), the precursor of the prenyl side chain of menaquinone-6. Large subunit Hexs-B catalyzes the condensation reaction and the final product chain length is cooperatively regulated by both the Hexs-A and Hexs-B subunits using the whole size of the hydrophobic cleft as a ruler. The protein is Hexaprenyl-diphosphate synthase small subunit ((2E,6E)-farnesyl-diphosphate specific) (hexs-a) of Micrococcus luteus (Micrococcus lysodeikticus).